Here is a 263-residue protein sequence, read N- to C-terminus: 7beta-hydroxysteroid dehydrogenase (263 aa).

NADP(+)-binding positions include 17–21, 40–41, and 66–67; these read TEGVG, RR, and DF. Tyr-156 functions as the Proton acceptor in the catalytic mechanism. Ser-240 lines the NADP(+) pocket.

It belongs to the short-chain dehydrogenases/reductases (SDR) family. In terms of assembly, homodimer.

The catalysed reaction is a 7beta-hydroxysteroid + NADP(+) = a 7-oxosteroid + NADPH + H(+). It catalyses the reaction 7-oxolithocholate + NADPH + H(+) = ursodeoxycholate + NADP(+). The enzyme catalyses 7beta-hydroxy-3,12-dioxo-5beta-cholan-24-oate + NADP(+) = dehydrocholate + NADPH + H(+). It carries out the reaction ursocholate + NADP(+) = 3alpha,12alpha-dihydroxy-7-oxo-5beta-cholanate + NADPH + H(+). In terms of biological role, 7beta-hydroxysteroid dehydrogenase that catalyzes the reduction of the 7-oxo group of 7-oxo-lithocholate (7-oxo-LCA), to yield ursodeoxycholate (UDCA). As C.aerofaciens is an intestinal bacterium, this enzyme probably contributes to the formation of UDCA in the human colon. UDCA is regarded as a chemopreventive beneficial secondary bile acid due to its low hydrophobicity; it protects hepatocytes and bile duct epithelial cells against necrosis and apoptosis induced by more hydrophobic secondary bile acids like deoxycholate (DCA). This enzyme is also able to catalyze the reverse reaction, i.e. the oxidation of the 7beta-hydroxy group of UDCA to 7-oxo-LCA. To a lesser extent, is also active on the taurine- and glycine-conjugates of ursodeoxycholate. It is specific for NADPH/NADP(+) as the electron acceptor/donor since it is not active with NADH/NAD(+). In the presence of NADPH, 7beta-HSDH can also reduce dehydrocholate. And is also able to oxidize ursocholate. This is 7beta-hydroxysteroid dehydrogenase from Collinsella aerofaciens (strain ATCC 25986 / DSM 3979 / JCM 10188 / KCTC 3647 / NCTC 11838 / VPI 1003).